The sequence spans 263 residues: 3-methyl-2-oxobutanoate hydroxymethyltransferase (263 aa).

Mg(2+) is bound by residues D44 and D83. 3-methyl-2-oxobutanoate-binding positions include 44–45 (DS), D83, and K112. E114 lines the Mg(2+) pocket. E181 acts as the Proton acceptor in catalysis.

The protein belongs to the PanB family. In terms of assembly, homodecamer; pentamer of dimers. Mg(2+) serves as cofactor.

It is found in the cytoplasm. It catalyses the reaction 3-methyl-2-oxobutanoate + (6R)-5,10-methylene-5,6,7,8-tetrahydrofolate + H2O = 2-dehydropantoate + (6S)-5,6,7,8-tetrahydrofolate. Its pathway is cofactor biosynthesis; (R)-pantothenate biosynthesis; (R)-pantoate from 3-methyl-2-oxobutanoate: step 1/2. Its function is as follows. Catalyzes the reversible reaction in which hydroxymethyl group from 5,10-methylenetetrahydrofolate is transferred onto alpha-ketoisovalerate to form ketopantoate. This is 3-methyl-2-oxobutanoate hydroxymethyltransferase from Nitrosospira multiformis (strain ATCC 25196 / NCIMB 11849 / C 71).